A 218-amino-acid chain; its full sequence is Putative NAD(P)H nitroreductase SH0546 (218 aa).

Belongs to the nitroreductase family. Requires FMN as cofactor.

In Staphylococcus haemolyticus (strain JCSC1435), this protein is Putative NAD(P)H nitroreductase SH0546.